The following is a 137-amino-acid chain: Nucleoside diphosphate kinase (137 aa).

Residues Lys-10, Phe-58, Arg-86, Thr-92, Arg-103, and Asn-113 each coordinate ATP. The Pros-phosphohistidine intermediate role is filled by His-116.

It belongs to the NDK family. Homotetramer. Mg(2+) is required as a cofactor.

Its subcellular location is the cytoplasm. The enzyme catalyses a 2'-deoxyribonucleoside 5'-diphosphate + ATP = a 2'-deoxyribonucleoside 5'-triphosphate + ADP. It carries out the reaction a ribonucleoside 5'-diphosphate + ATP = a ribonucleoside 5'-triphosphate + ADP. Its function is as follows. Major role in the synthesis of nucleoside triphosphates other than ATP. The ATP gamma phosphate is transferred to the NDP beta phosphate via a ping-pong mechanism, using a phosphorylated active-site intermediate. The sequence is that of Nucleoside diphosphate kinase from Helicobacter pylori (strain ATCC 700392 / 26695) (Campylobacter pylori).